The following is a 194-amino-acid chain: Orotate phosphoribosyltransferase (194 aa).

Residue 117–125 (EDIVTTGLS) participates in 5-phospho-alpha-D-ribose 1-diphosphate binding. Thr-121 and Arg-149 together coordinate orotate.

It belongs to the purine/pyrimidine phosphoribosyltransferase family. PyrE subfamily. Homodimer. It depends on Mg(2+) as a cofactor.

It carries out the reaction orotidine 5'-phosphate + diphosphate = orotate + 5-phospho-alpha-D-ribose 1-diphosphate. It participates in pyrimidine metabolism; UMP biosynthesis via de novo pathway; UMP from orotate: step 1/2. Functionally, catalyzes the transfer of a ribosyl phosphate group from 5-phosphoribose 1-diphosphate to orotate, leading to the formation of orotidine monophosphate (OMP). In Parvibaculum lavamentivorans (strain DS-1 / DSM 13023 / NCIMB 13966), this protein is Orotate phosphoribosyltransferase.